The sequence spans 108 residues: Ig kappa chain V-V region NQ5-89.4 (108 aa).

Residues 1-23 (DIQMTQTTSSLSASLGHRVTITC) are framework-1. Cysteines 23 and 88 form a disulfide. The interval 24–34 (SASQDISNYLN) is complementarity-determining-1. The tract at residues 35–49 (WYQQKPDGTVKLLIY) is framework-2. A complementarity-determining-2 region spans residues 50-56 (YTSRLHS). The tract at residues 57–88 (GVPSRFSGSGSATDYSLTITNLQQEDXATYXC) is framework-3. A complementarity-determining-3 region spans residues 89-97 (QQGNTLPYT). A framework-4 region spans residues 98 to 107 (FGGGTKLXIK).

Anti-2-phenyl oxazolone (PHOX) Antibody. The sequence is that of Ig kappa chain V-V region NQ5-89.4 from Mus musculus (Mouse).